We begin with the raw amino-acid sequence, 288 residues long: Pantothenate synthetase (288 aa).

An ATP-binding site is contributed by 30-37; the sequence is MGNLHNGH. His37 serves as the catalytic Proton donor. (R)-pantoate is bound at residue Gln61. Gln61 lines the beta-alanine pocket. 149–152 lines the ATP pocket; it reads GQKD. Gln155 is a (R)-pantoate binding site. Residues Val178 and 186-189 each bind ATP; that span reads LSSR.

It belongs to the pantothenate synthetase family. Homodimer.

Its subcellular location is the cytoplasm. It catalyses the reaction (R)-pantoate + beta-alanine + ATP = (R)-pantothenate + AMP + diphosphate + H(+). It participates in cofactor biosynthesis; (R)-pantothenate biosynthesis; (R)-pantothenate from (R)-pantoate and beta-alanine: step 1/1. Its function is as follows. Catalyzes the condensation of pantoate with beta-alanine in an ATP-dependent reaction via a pantoyl-adenylate intermediate. The polypeptide is Pantothenate synthetase (Tolumonas auensis (strain DSM 9187 / NBRC 110442 / TA 4)).